Consider the following 907-residue polypeptide: Protein translocase subunit SecA (907 aa).

ATP is bound by residues Q87, 105–109, and D513; that span reads GEGKT. Over residues 841 to 853 the composition is skewed to basic and acidic residues; sequence EAQRRAQAEEAAR. The disordered stretch occupies residues 841 to 907; it reads EAQRRAQAEE…KYKQCHGQIN (67 aa). The segment covering 854–865 has biased composition (low complexity); it reads RAQAQHASAQSQ. Basic and acidic residues predominate over residues 872-887; the sequence is EGHHQPVVRDERKVGR. 4 residues coordinate Zn(2+): C891, C893, C902, and H903.

This sequence belongs to the SecA family. In terms of assembly, monomer and homodimer. Part of the essential Sec protein translocation apparatus which comprises SecA, SecYEG and auxiliary proteins SecDF-YajC and YidC. The cofactor is Zn(2+).

It localises to the cell inner membrane. It is found in the cytoplasm. It carries out the reaction ATP + H2O + cellular proteinSide 1 = ADP + phosphate + cellular proteinSide 2.. Part of the Sec protein translocase complex. Interacts with the SecYEG preprotein conducting channel. Has a central role in coupling the hydrolysis of ATP to the transfer of proteins into and across the cell membrane, serving both as a receptor for the preprotein-SecB complex and as an ATP-driven molecular motor driving the stepwise translocation of polypeptide chains across the membrane. The sequence is that of Protein translocase subunit SecA from Vibrio vulnificus (strain CMCP6).